The chain runs to 358 residues: Protein-L-isoaspartate O-methyltransferase domain-containing protein 1 (358 aa).

Gly-2 is lipidated: N-myristoyl glycine. Residue Ser-64 is part of the active site. 3 adoMet binding motif regions span residues 85-94 (LNLGSGTGYL), 160-164 (YDRIY), and 181-191 (LKVGGILVMPI). The segment at 240–250 (VRNLQDLARIY) is BC-box. Residues 300–339 (PLDSEEDERMEDDNKEEEDKDHSEALKPEEPPRNLLREKI) are disordered. Residues 302–318 (DSEEDERMEDDNKEEED) are compositionally biased toward acidic residues. Residues 319–339 (KDHSEALKPEEPPRNLLREKI) show a composition bias toward basic and acidic residues. The segment at 342–345 (LPLP) is CUL-box.

Belongs to the methyltransferase superfamily. L-isoaspartyl/D-aspartyl protein methyltransferase family. In terms of assembly, component of the probable ECS(PCMTD1) E3 ubiquitin-protein ligase complex, at least composed of CUL5, ELOB, ELOC, RBX2 and PCMTD1.

It localises to the cytoplasm. It is found in the membrane. Its function is as follows. Substrate recognition component of an ECS (Elongin BC-CUL5-SOCS-box protein) E3 ubiquitin ligase complex which mediates the ubiquitination and subsequent proteasomal degradation of target proteins. Specifically binds to the methyltransferase cofactor S-adenosylmethionine (AdoMet) via the N-terminal AdoMet binding motif, but does not display methyltransferase activity. May provide an alternate maintenance pathway for modified proteins by acting as a damage-specific E3 ubiquitin ligase adaptor protein. The polypeptide is Protein-L-isoaspartate O-methyltransferase domain-containing protein 1 (PCMTD1) (Gallus gallus (Chicken)).